The following is a 191-amino-acid chain: Protein HP-20 homolog (191 aa).

Positions 1–16 (MADLRILVSIILMTNA) are cleaved as a signal peptide. Positions 22 to 58 (GCTGPPGPPGHPGPPGIRGPPGIRGIPGLPGPPGTPG) constitute a Collagen-like domain. Positions 22 to 61 (GCTGPPGPPGHPGPPGIRGPPGIRGIPGLPGPPGTPGPSV) are disordered. A compositionally biased stretch (pro residues) spans 26–39 (PPGPPGHPGPPGIR). The C1q domain maps to 64–191 (PCHRQSAFTV…VTIYFSGFLT (128 aa)).

Its subcellular location is the secreted. This Bos taurus (Bovine) protein is Protein HP-20 homolog.